The chain runs to 423 residues: Glycine amidinotransferase, mitochondrial (423 aa).

A mitochondrion-targeting transit peptide spans 1–43; sequence MLRVRCLRGGSRGAEAVHYIGSRLGGSLTGWVQRTFQSTQAAT. Residues Ser46 and Ser49 each carry the phosphoserine modification. Asp170 lines the arginine pocket. Active-site residues include Asp254 and His303. Asp305, Arg322, Ser354, and Ser355 together coordinate arginine. Lys385 is subject to N6-acetyllysine. Cys407 serves as the catalytic Amidino-cysteine intermediate.

The protein belongs to the amidinotransferase family. As to quaternary structure, homodimer. Expressed in kidney, brain, gonads, uterus, and embryonic head, chest and abdomen. Maternally expressed in the placenta and yolk sac of embryos.

It localises to the mitochondrion inner membrane. The catalysed reaction is L-arginine + glycine = guanidinoacetate + L-ornithine. It carries out the reaction 4-aminobutanoate + L-arginine = 4-guanidinobutanoate + L-ornithine. The enzyme catalyses beta-alanine + L-arginine = 3-guanidinopropanoate + L-ornithine. It catalyses the reaction taurine + L-arginine = taurocyamine + L-ornithine. Its pathway is amine and polyamine biosynthesis; creatine biosynthesis; creatine from L-arginine and glycine: step 1/2. Transamidinase that catalyzes the transfer of the amidino group of L-arginine onto the amino moiety of acceptor metabolites such as glycine, beta-alanine, gamma-aminobutyric acid (GABA) and taurine yielding the corresponding guanidine derivatives. Catalyzes the rate-limiting step of creatine biosynthesis, namely the transfer of the amidino group from L-arginine to glycine to generate guanidinoacetate, which is then methylated by GAMT to form creatine. Provides creatine as a source for ATP generation in tissues with high energy demands, in particular skeletal muscle, heart and brain. This is Glycine amidinotransferase, mitochondrial (Gatm) from Mus musculus (Mouse).